Reading from the N-terminus, the 368-residue chain is L-arabinitol 4-dehydrogenase (368 aa).

The Zn(2+) site is built by C52, H77, E78, C107, C110, C113, C121, and E162. The NAD(+) site is built by D210, R215, and I282.

This sequence belongs to the zinc-containing alcohol dehydrogenase family. In terms of assembly, homotetramer. The cofactor is Zn(2+).

The catalysed reaction is L-arabinitol + NAD(+) = L-xylulose + NADH + H(+). In terms of biological role, plays a key role in liamocins biosynthesis by providing the arabinol moity that is linked to 3,5-dihydroxydecanoic acid (provided by the HR-PKS PKS1) via ester bond formation catalyzed by the esterase EST1. The protein is L-arabinitol 4-dehydrogenase of Aureobasidium melanogenum (Aureobasidium pullulans var. melanogenum).